The chain runs to 258 residues: Acyl-[acyl-carrier-protein]--UDP-N-acetylglucosamine O-acyltransferase (258 aa).

It belongs to the transferase hexapeptide repeat family. LpxA subfamily. As to quaternary structure, homotrimer.

Its subcellular location is the cytoplasm. The catalysed reaction is a (3R)-hydroxyacyl-[ACP] + UDP-N-acetyl-alpha-D-glucosamine = a UDP-3-O-[(3R)-3-hydroxyacyl]-N-acetyl-alpha-D-glucosamine + holo-[ACP]. It participates in glycolipid biosynthesis; lipid IV(A) biosynthesis; lipid IV(A) from (3R)-3-hydroxytetradecanoyl-[acyl-carrier-protein] and UDP-N-acetyl-alpha-D-glucosamine: step 1/6. In terms of biological role, involved in the biosynthesis of lipid A, a phosphorylated glycolipid that anchors the lipopolysaccharide to the outer membrane of the cell. The sequence is that of Acyl-[acyl-carrier-protein]--UDP-N-acetylglucosamine O-acyltransferase from Neisseria meningitidis serogroup B (strain ATCC BAA-335 / MC58).